Here is a 603-residue protein sequence, read N- to C-terminus: Aspartate--tRNA(Asp/Asn) ligase (603 aa).

The interval Gln205 to Lys208 is aspartate. Position 227 (Arg227) interacts with L-aspartate. ATP contacts are provided by residues Arg227 to Glu229 and Gln236. Residue His463 participates in L-aspartate binding. Glu497 lines the ATP pocket. An L-aspartate-binding site is contributed by Arg504. Residue Gly549–Arg552 coordinates ATP.

Belongs to the class-II aminoacyl-tRNA synthetase family. Type 1 subfamily. As to quaternary structure, homodimer.

It localises to the cytoplasm. The enzyme catalyses tRNA(Asx) + L-aspartate + ATP = L-aspartyl-tRNA(Asx) + AMP + diphosphate. Functionally, aspartyl-tRNA synthetase with relaxed tRNA specificity since it is able to aspartylate not only its cognate tRNA(Asp) but also tRNA(Asn). Reaction proceeds in two steps: L-aspartate is first activated by ATP to form Asp-AMP and then transferred to the acceptor end of tRNA(Asp/Asn). The polypeptide is Aspartate--tRNA(Asp/Asn) ligase (Anaeromyxobacter sp. (strain K)).